Consider the following 745-residue polypeptide: MFNEITKSVTWNGKVLELSTGKIARQADGAVTVKMGNSVLLCTVVVANKAKEGIGFFPLTINYREMAYAAGKIPGGFFKREGKASDREVLVSRLIDRPIRPLFHPAFVNETHVTCSVLSYDPEIPVDILAIIGASAALSLSPAPYLEMVAASKVGLINGEFVLNPTLELLKTSQLDLVVAGTSDSVMMVESEAHLLSEEQMLEAVKFGFESFQPVIKIIKELAEEAKKPKLEMQDLYPASLKKEIEKLFVKEIEQAFAIKSKQERSTNLDLIPEKVLTHFVSDIENKKYSNYQIESALKAIESDILRNEILEKNRRIDGRSTTDIRQIACEIGLLPSAHGSALFTRGETQSLVSTTFGTSLDEQIVDSLEGEYKERFMLNYIFPPYSVNEAMPMKVPSRREVGHGKLAWRAINPILPNKVQFPYSIRVVAETTESNGSSSMATVCGSSLALMYAGVPIKAPVAGIAMGLVKEGKKFAVLSDILGDEDYFGDMDFKVAGTSEGITALQMDIKISGVDFKIMKVALEQARLGRLHILEQMNKVISKPNNELSKNAPSTTTIKIDKDKIRDIIGPGGKVIKEICEISGAKIDISDDGTVSIYASDRDKLKVALDKIKAIAVEPEIGEIFNGTVMKVLDSGAFINYLGNKDGFVHISEISEERIETVSSVLKQGDIVKVKLIGFDNKGKAKLTIKNADKDKSSNNTKPKTNAKDNSEPEQRRDSSKKRAWNEDNNAETAEVITERKYFN.

Residues Asp-487 and Asp-493 each contribute to the Mg(2+) site. The KH domain maps to 554–613; sequence PSTTTIKIDKDKIRDIIGPGGKVIKEICEISGAKIDISDDGTVSIYASDRDKLKVALDKI. In terms of domain architecture, S1 motif spans 623–691; that stretch reads GEIFNGTVMK…NKGKAKLTIK (69 aa). A disordered region spans residues 691 to 745; that stretch reads KNADKDKSSNNTKPKTNAKDNSEPEQRRDSSKKRAWNEDNNAETAEVITERKYFN. Over residues 707 to 719 the composition is skewed to basic and acidic residues; that stretch reads NAKDNSEPEQRRD.

The protein belongs to the polyribonucleotide nucleotidyltransferase family. Mg(2+) is required as a cofactor.

The protein localises to the cytoplasm. It catalyses the reaction RNA(n+1) + phosphate = RNA(n) + a ribonucleoside 5'-diphosphate. Functionally, involved in mRNA degradation. Catalyzes the phosphorolysis of single-stranded polyribonucleotides processively in the 3'- to 5'-direction. This is Polyribonucleotide nucleotidyltransferase from Rickettsia massiliae (strain Mtu5).